Consider the following 713-residue polypeptide: Nuclear poly(A) polymerase 1 (713 aa).

ATP is bound by residues 91–93 (FGS), 103–106 (ADID), aspartate 159, tyrosine 229, and 238–239 (GI). Residues aspartate 104, aspartate 106, and aspartate 159 each coordinate Mg(2+). The tract at residues 480–555 (FVFPGGVRPS…TLTDQPRNSK (76 aa)) is disordered. The segment covering 507 to 526 (SSTSSAPAATTTTTEMSSES) has biased composition (low complexity).

This sequence belongs to the poly(A) polymerase family. As to quaternary structure, monomer. Forms a complex with cleavage and polyadenylation specificity factor (CPSF) subunit PAPS4. Mg(2+) serves as cofactor. Requires Mn(2+) as cofactor. As to expression, expressed in stems, cotyledons, hypocotyls, radicle, leaves, and, to a lower extent, in roots (including primary and secondary roots as well as root tips) and flowers. In radicle, roots and leaves, mainly present in vascular tissues.

The protein localises to the nucleus. The catalysed reaction is RNA(n) + ATP = RNA(n)-3'-adenine ribonucleotide + diphosphate. Functionally, essential protein. Polymerase that creates the 3'-poly(A) tail of mRNA's. Also required for the endoribonucleolytic cleavage reaction at some polyadenylation sites. May acquire specificity through interaction with a cleavage and polyadenylation specificity factor (CPSF) at its C-terminus. This is Nuclear poly(A) polymerase 1 from Arabidopsis thaliana (Mouse-ear cress).